Here is a 699-residue protein sequence, read N- to C-terminus: Endogenous retrovirus group K member 113 Env polyprotein (699 aa).

A disordered region spans residues 1 to 47 (MNPSEMQRKAPPRRRRHRNRAPLTHKMNKMVTSEEQMKLPSTKKAEP). Residues 1–89 (MNPSEMQRKA…ALMIVSMVVS (89 aa)) form the signal peptide. The segment covering 10 to 20 (APPRRRRHRNR) has biased composition (basic residues). Over 90 to 632 (LPMPAGAAAA…NLNPVTWVKT (543 aa)) the chain is Extracellular. Asn100, Asn128, Asn153, Asn274, Asn355, Asn372, and Asn461 each carry an N-linked (GlcNAc...) asparagine glycan. A fusion peptide region spans residues 466–486 (FIFTLIAVIMGLIAVTATAAV). Asn507, Asn554, Asn566, and Asn585 each carry an N-linked (GlcNAc...) asparagine glycan. A helical membrane pass occupies residues 633–653 (IGSTTIINLILILVCLFCLLL). Residues 654–699 (VCRCTQQLRRDSDHRERAMMTMAVLSKRKGGNVGKSKRDQIVTVSV) lie on the Cytoplasmic side of the membrane.

The protein belongs to the beta type-B retroviral envelope protein family. HERV class-II K(HML-2) env subfamily. The surface (SU) and transmembrane (TM) proteins form a heterodimer. SU and TM are attached by noncovalent interactions or by a labile interchain disulfide bond. Specific enzymatic cleavages in vivo yield the mature SU and TM proteins.

The protein resides in the cell membrane. Its subcellular location is the virion. Functionally, retroviral envelope proteins mediate receptor recognition and membrane fusion during early infection. Endogenous envelope proteins may have kept, lost or modified their original function during evolution. This endogenous envelope protein has lost its original fusogenic properties. SU mediates receptor recognition. In terms of biological role, TM anchors the envelope heterodimer to the viral membrane through one transmembrane domain. The other hydrophobic domain, called fusion peptide, mediates fusion of the viral membrane with the target cell membrane. The sequence is that of Endogenous retrovirus group K member 113 Env polyprotein (HERVK_113) from Homo sapiens (Human).